The chain runs to 88 residues: UPF0213 protein SAG0778 (88 aa).

The GIY-YIG domain occupies 4–80 (VPAYMYVLEC…QKTRQAKLTY (77 aa)).

The protein belongs to the UPF0213 family.

The sequence is that of UPF0213 protein SAG0778 from Streptococcus agalactiae serotype V (strain ATCC BAA-611 / 2603 V/R).